The chain runs to 495 residues: Glutamyl-tRNA(Gln) amidotransferase subunit A (495 aa).

Active-site charge relay system residues include K79 and S159. S183 (acyl-ester intermediate) is an active-site residue.

It belongs to the amidase family. GatA subfamily. As to quaternary structure, heterotrimer of A, B and C subunits.

It carries out the reaction L-glutamyl-tRNA(Gln) + L-glutamine + ATP + H2O = L-glutaminyl-tRNA(Gln) + L-glutamate + ADP + phosphate + H(+). In terms of biological role, allows the formation of correctly charged Gln-tRNA(Gln) through the transamidation of misacylated Glu-tRNA(Gln) in organisms which lack glutaminyl-tRNA synthetase. The reaction takes place in the presence of glutamine and ATP through an activated gamma-phospho-Glu-tRNA(Gln). This is Glutamyl-tRNA(Gln) amidotransferase subunit A from Gluconobacter oxydans (strain 621H) (Gluconobacter suboxydans).